The primary structure comprises 451 residues: Phosphoglucosamine mutase (451 aa).

S102 acts as the Phosphoserine intermediate in catalysis. Mg(2+) is bound by residues S102, D244, D246, and D248. Position 102 is a phosphoserine (S102).

This sequence belongs to the phosphohexose mutase family. Requires Mg(2+) as cofactor. Activated by phosphorylation.

It catalyses the reaction alpha-D-glucosamine 1-phosphate = D-glucosamine 6-phosphate. Catalyzes the conversion of glucosamine-6-phosphate to glucosamine-1-phosphate. This chain is Phosphoglucosamine mutase, found in Lawsonia intracellularis (strain PHE/MN1-00).